A 105-amino-acid chain; its full sequence is Heat shock protein HspQ (105 aa).

Positions 75-105 are disordered; it reads GEAQEAHPEQPSLDELAESIRHQLQAPRLRN.

It belongs to the HspQ family.

It localises to the cytoplasm. Its function is as follows. Involved in the degradation of certain denaturated proteins, including DnaA, during heat shock stress. This Serratia proteamaculans (strain 568) protein is Heat shock protein HspQ.